The sequence spans 366 residues: tRNA/tmRNA (uracil-C(5))-methyltransferase (366 aa).

Positions 190, 218, 223, 239, and 299 each coordinate S-adenosyl-L-methionine. The Nucleophile role is filled by cysteine 324. Glutamate 358 (proton acceptor) is an active-site residue.

The protein belongs to the class I-like SAM-binding methyltransferase superfamily. RNA M5U methyltransferase family. TrmA subfamily.

It catalyses the reaction uridine(54) in tRNA + S-adenosyl-L-methionine = 5-methyluridine(54) in tRNA + S-adenosyl-L-homocysteine + H(+). It carries out the reaction uridine(341) in tmRNA + S-adenosyl-L-methionine = 5-methyluridine(341) in tmRNA + S-adenosyl-L-homocysteine + H(+). Dual-specificity methyltransferase that catalyzes the formation of 5-methyluridine at position 54 (m5U54) in all tRNAs, and that of position 341 (m5U341) in tmRNA (transfer-mRNA). The polypeptide is tRNA/tmRNA (uracil-C(5))-methyltransferase (Escherichia coli O127:H6 (strain E2348/69 / EPEC)).